Consider the following 304-residue polypeptide: dTDP-4-dehydrorhamnose reductase (304 aa).

Residues 16–18 (GML), 42–43 (DI), and 66–68 (AWT) contribute to the NADH site. Residues 17-18 (ML), 42-43 (DI), and 66-68 (AWT) each bind NADPH. 107 to 108 (TD) contacts dTDP-beta-L-rhamnose. NADH contacts are provided by Y131 and K135. NADPH is bound by residues Y131 and K135. Y131 (proton donor/acceptor) is an active-site residue. W157 contacts dTDP-beta-L-rhamnose.

This sequence belongs to the dTDP-4-dehydrorhamnose reductase family. Homodimer. Requires Mg(2+) as cofactor.

The catalysed reaction is dTDP-beta-L-rhamnose + NADP(+) = dTDP-4-dehydro-beta-L-rhamnose + NADPH + H(+). It functions in the pathway carbohydrate biosynthesis; dTDP-L-rhamnose biosynthesis. Its pathway is antibiotic biosynthesis; streptomycin biosynthesis. Involved in the biosynthesis of the streptose moiety of streptomycin. Catalyzes the reduction of dTDP-6-deoxy-L-lyxo-4-hexulose to yield dTDP-L-rhamnose. RmlD uses NADH and NADPH nearly equally well. The polypeptide is dTDP-4-dehydrorhamnose reductase (Streptomyces griseus).